A 305-amino-acid chain; its full sequence is Glycine--tRNA ligase alpha subunit (305 aa).

This sequence belongs to the class-II aminoacyl-tRNA synthetase family. As to quaternary structure, tetramer of two alpha and two beta subunits.

It is found in the cytoplasm. The enzyme catalyses tRNA(Gly) + glycine + ATP = glycyl-tRNA(Gly) + AMP + diphosphate. The protein is Glycine--tRNA ligase alpha subunit of Ligilactobacillus salivarius (strain UCC118) (Lactobacillus salivarius).